The primary structure comprises 72 residues: Translation initiation factor IF-1 (72 aa).

The S1-like domain maps to 1–72 (MPKEEVLEFP…TKGRITYRFK (72 aa)).

Belongs to the IF-1 family. Component of the 30S ribosomal translation pre-initiation complex which assembles on the 30S ribosome in the order IF-2 and IF-3, IF-1 and N-formylmethionyl-tRNA(fMet); mRNA recruitment can occur at any time during PIC assembly.

The protein localises to the cytoplasm. One of the essential components for the initiation of protein synthesis. Stabilizes the binding of IF-2 and IF-3 on the 30S subunit to which N-formylmethionyl-tRNA(fMet) subsequently binds. Helps modulate mRNA selection, yielding the 30S pre-initiation complex (PIC). Upon addition of the 50S ribosomal subunit IF-1, IF-2 and IF-3 are released leaving the mature 70S translation initiation complex. This Rhizobium etli (strain ATCC 51251 / DSM 11541 / JCM 21823 / NBRC 15573 / CFN 42) protein is Translation initiation factor IF-1.